The primary structure comprises 100 residues: MITKEEAQKIAKLARLKFEEDTVEKFSAQLSTIMNMIDILNEIDCKDIEPLTSVSNMNVRMREDVVTSSDLSNKLFDNVSGNSAQLAKEVKYFITPKVIE.

This sequence belongs to the GatC family. In terms of assembly, heterotrimer of A, B and C subunits.

The catalysed reaction is L-glutamyl-tRNA(Gln) + L-glutamine + ATP + H2O = L-glutaminyl-tRNA(Gln) + L-glutamate + ADP + phosphate + H(+). The enzyme catalyses L-aspartyl-tRNA(Asn) + L-glutamine + ATP + H2O = L-asparaginyl-tRNA(Asn) + L-glutamate + ADP + phosphate + 2 H(+). Allows the formation of correctly charged Asn-tRNA(Asn) or Gln-tRNA(Gln) through the transamidation of misacylated Asp-tRNA(Asn) or Glu-tRNA(Gln) in organisms which lack either or both of asparaginyl-tRNA or glutaminyl-tRNA synthetases. The reaction takes place in the presence of glutamine and ATP through an activated phospho-Asp-tRNA(Asn) or phospho-Glu-tRNA(Gln). The polypeptide is Aspartyl/glutamyl-tRNA(Asn/Gln) amidotransferase subunit C (Rickettsia felis (strain ATCC VR-1525 / URRWXCal2) (Rickettsia azadi)).